We begin with the raw amino-acid sequence, 118 residues long: Large ribosomal subunit protein uL22 (118 aa).

It belongs to the universal ribosomal protein uL22 family. Part of the 50S ribosomal subunit.

Its function is as follows. This protein binds specifically to 23S rRNA; its binding is stimulated by other ribosomal proteins, e.g. L4, L17, and L20. It is important during the early stages of 50S assembly. It makes multiple contacts with different domains of the 23S rRNA in the assembled 50S subunit and ribosome. In terms of biological role, the globular domain of the protein is located near the polypeptide exit tunnel on the outside of the subunit, while an extended beta-hairpin is found that lines the wall of the exit tunnel in the center of the 70S ribosome. The sequence is that of Large ribosomal subunit protein uL22 from Leuconostoc citreum (strain KM20).